A 1342-amino-acid chain; its full sequence is DNA-directed RNA polymerase subunit beta (1342 aa).

It belongs to the RNA polymerase beta chain family. In terms of assembly, the RNAP catalytic core consists of 2 alpha, 1 beta, 1 beta' and 1 omega subunit. When a sigma factor is associated with the core the holoenzyme is formed, which can initiate transcription.

The catalysed reaction is RNA(n) + a ribonucleoside 5'-triphosphate = RNA(n+1) + diphosphate. In terms of biological role, DNA-dependent RNA polymerase catalyzes the transcription of DNA into RNA using the four ribonucleoside triphosphates as substrates. This is DNA-directed RNA polymerase subunit beta from Vibrio parahaemolyticus serotype O3:K6 (strain RIMD 2210633).